The chain runs to 391 residues: PPE family protein PPE15 (391 aa).

The interval 312 to 367 (LGEATLVGRLSVPAAWSTAAPATTAGATALEGSGWTVAAEEAGPVTGMMPGMASAA) is eukaryotic-like SH3 domain.

This sequence belongs to the mycobacterial PPE family. As to quaternary structure, forms a heterodimer with PE8. The dimer forms a 1:1:1 heterotrimeric complex with EspG5. PPE15 interacts directly with EspG5. Interacts via the C-terminal region with host Toll-like receptor 4 (TLR4). Interacts, also via the C-terminal region, with two cytosolic subunits of the host NOX complex, p47phox (NCF1) and p67phox (NCF2).

It is found in the secreted. Its subcellular location is the host mitochondrion. May play a critical role in the homeostasis of triacylglycerol-containing lipid droplets in M.tuberculosis and influence the entry of the pathogen into a dormant state. Is recognized by host TLR4 receptor at the macrophage cell surface, which modulates the host immune response, induces mitochondrial stress and perturbations, and induces macrophage apoptosis leading to pathogen persistence. Also downregulates NOX-mediated reactive oxygen species (ROS) generation in THP1 macrophages, which increases intracellular survival of bacteria. PPE15 interacts with two subunits of the host NADPH oxidase (NOX) complex in the cytosol of macrophages and prevents their migration to the membrane, which inhibits the assembly of the NOX complex at the plasma membrane of THP1 macrophages. This leads to reduced NOX activity and diminished ROS generation. The protein is PPE family protein PPE15 (PPE15) of Mycobacterium tuberculosis (strain CDC 1551 / Oshkosh).